The primary structure comprises 237 residues: Flagellar brake protein YcgR (237 aa).

A PilZ domain is found at 108–225 (QRRRQFRVTT…MERKIQSAVF (118 aa)).

This sequence belongs to the YcgR family. Monomer. Interacts with the flagellar basal bodies.

It is found in the bacterial flagellum basal body. Functionally, acts as a flagellar brake, regulating swimming and swarming in a bis-(3'-5') cyclic diguanylic acid (c-di-GMP)-dependent manner. Binds 1 c-di-GMP dimer per subunit. Increasing levels of c-di-GMP lead to decreased motility. The sequence is that of Flagellar brake protein YcgR from Serratia proteamaculans (strain 568).